Reading from the N-terminus, the 492-residue chain is Membrane-bound lytic murein transglycosylase F (492 aa).

A signal peptide spans 1-18 (MKGLFLRIIAIVALLLWA). The non-LT domain stretch occupies residues 19-268 (IDMVFPWQQI…RIEEKYFNHL (250 aa)). The LT domain stretch occupies residues 270–492 (QFDYVDTRSY…DTLATTVTTQ (223 aa)). E313 is an active-site residue.

It in the N-terminal section; belongs to the bacterial solute-binding protein 3 family. In the C-terminal section; belongs to the transglycosylase Slt family.

It localises to the cell outer membrane. It catalyses the reaction Exolytic cleavage of the (1-&gt;4)-beta-glycosidic linkage between N-acetylmuramic acid (MurNAc) and N-acetylglucosamine (GlcNAc) residues in peptidoglycan, from either the reducing or the non-reducing ends of the peptidoglycan chains, with concomitant formation of a 1,6-anhydrobond in the MurNAc residue.. Its function is as follows. Murein-degrading enzyme that degrades murein glycan strands and insoluble, high-molecular weight murein sacculi, with the concomitant formation of a 1,6-anhydromuramoyl product. Lytic transglycosylases (LTs) play an integral role in the metabolism of the peptidoglycan (PG) sacculus. Their lytic action creates space within the PG sacculus to allow for its expansion as well as for the insertion of various structures such as secretion systems and flagella. This is Membrane-bound lytic murein transglycosylase F from Pasteurella multocida (strain Pm70).